A 4543-amino-acid chain; its full sequence is Low-density lipoprotein receptor-related protein 1 (4543 aa).

A signal peptide spans 1 to 21; it reads MGPLLALAGCLLALLAAPAAR. At 22–4419 the chain is on the extracellular side; the sequence is ALEAPKTCSP…EFIVGEQQSG (4398 aa). LDL-receptor class A domains follow at residues 27–68 and 72–112; these read KTCS…ICPQ and SRCQ…HCRE. 6 cysteine pairs are disulfide-bonded: cysteine 29–cysteine 42, cysteine 36–cysteine 55, cysteine 49–cysteine 66, cysteine 74–cysteine 87, cysteine 81–cysteine 100, and cysteine 94–cysteine 110. An EGF-like 1 domain is found at 113–151; that stretch reads QLANCTALGCQHHCVPTLSGPACYCNNSFQLAEDRRSCK. Asparagine 116 carries N-linked (GlcNAc...) asparagine glycosylation. 6 disulfide bridges follow: cysteine 117–cysteine 126, cysteine 122–cysteine 135, cysteine 137–cysteine 150, cysteine 156–cysteine 166, cysteine 162–cysteine 175, and cysteine 177–cysteine 190. The N-linked (GlcNAc...) asparagine glycan is linked to asparagine 138. Positions 152-191 constitute an EGF-like 2; calcium-binding domain; that stretch reads DFDECTVYGTCSQTCTNTEGSYTCSCVEGYLLQPDNRSCK. Residues asparagine 187 and asparagine 276 are each glycosylated (N-linked (GlcNAc...) asparagine). 3 LDL-receptor class B repeats span residues 294–336, 337–380, and 381–424; these read GNFY…DPAM, GKVF…DLVS, and RLVY…FENY. Asparagine 359 carries an N-linked (GlcNAc...) asparagine glycan. Asparagine 448 is a glycosylation site (N-linked (GlcNAc...) asparagine). Positions 476 to 522 constitute an EGF-like 3 domain; sequence RSHACEPDQFGKPGGCSDICLLGNSHKSRTCRCRSGFSLGSDGKSCK. 3 disulfide bridges follow: cysteine 480/cysteine 495, cysteine 491/cysteine 506, and cysteine 508/cysteine 521. LDL-receptor class B repeat units follow at residues 573-615, 616-661, 662-712, and 713-756; these read GFIY…DWMG, NNLY…DPLN, GWMY…DIPA, and KILY…YSSF. N-linked (GlcNAc...) asparagine glycosylation occurs at asparagine 731. The EGF-like 4 domain maps to 801 to 841; sequence GSNKCRVNNGGCSSLCLATPRGRQCACAEDQILGADSVTCE. 33 disulfides stabilise this stretch: cysteine 805–cysteine 816, cysteine 812–cysteine 825, cysteine 827–cysteine 840, cysteine 852–cysteine 864, cysteine 859–cysteine 877, cysteine 871–cysteine 888, cysteine 893–cysteine 905, cysteine 900–cysteine 918, cysteine 912–cysteine 929, cysteine 934–cysteine 946, cysteine 941–cysteine 959, cysteine 953–cysteine 969, cysteine 974–cysteine 987, cysteine 982–cysteine 1000, cysteine 994–cysteine 1009, cysteine 1013–cysteine 1025, cysteine 1020–cysteine 1038, cysteine 1032–cysteine 1049, cysteine 1060–cysteine 1073, cysteine 1067–cysteine 1086, cysteine 1080–cysteine 1095, cysteine 1102–cysteine 1116, cysteine 1110–cysteine 1129, cysteine 1123–cysteine 1138, cysteine 1143–cysteine 1157, cysteine 1150–cysteine 1170, cysteine 1164–cysteine 1180, cysteine 1183–cysteine 1194, cysteine 1190–cysteine 1204, cysteine 1206–cysteine 1219, cysteine 1225–cysteine 1235, cysteine 1231–cysteine 1244, and cysteine 1246–cysteine 1259. LDL-receptor class A domains are found at residues 850–890, 891–931, 932–971, 972–1011, 1011–1051, 1058–1097, 1100–1140, and 1141–1180; these read PQCQ…LCHQ, HTCP…TCSA, RTCSPNQFSCASGRCIPISWTCDLDDDCGDRSDESASCAY, PTCFPLTQFTCNNGRCININWRCDNDNDCGDNSDEAGCSH, HSCS…NCTN, GGCHTDEFQCRLDGLCIPMRWRCDGDTDCMDSSDEKNCEG, HVCD…NCES, and LVCKPPSHTCANNTSICLPPEKLCDGSDDCGDGSDEGELC. Ca(2+) contacts are provided by tryptophan 869, aspartate 872, aspartate 874, aspartate 876, aspartate 882, and glutamate 883. An N-linked (GlcNAc...) asparagine glycan is attached at asparagine 926. Tryptophan 1030, aspartate 1033, aspartate 1035, aspartate 1037, aspartate 1043, and glutamate 1044 together coordinate Ca(2+). N-linked (GlcNAc...) asparagine glycosylation occurs at asparagine 1048. 6 residues coordinate Ca(2+): tryptophan 1078, aspartate 1081, aspartate 1083, aspartate 1085, aspartate 1091, and glutamate 1092. Residues asparagine 1152 and asparagine 1153 are each glycosylated (N-linked (GlcNAc...) asparagine). EGF-like domains follow at residues 1181-1220 and 1221-1260; these read DQCSLNNGGCSHNCTVAPGEGIVCSCPLGMELGADNKTCQ and IQSYCAKHLKCSQKCEQDKYNVKCSCYEGWMLEPDGESCR. Residues asparagine 1193 and asparagine 1216 are each glycosylated (N-linked (GlcNAc...) asparagine). Residue asparagine 1305 is glycosylated (N-linked (GlcNAc...) asparagine). LDL-receptor class B repeat units follow at residues 1307 to 1353, 1354 to 1396, 1397 to 1443, 1444 to 1488, and 1489 to 1529; these read SSLY…DWIA, GNIY…DPRY, GILF…DYLE, KRIL…YGGE, and VYWT…YHPS. Residue asparagine 1509 is glycosylated (N-linked (GlcNAc...) asparagine). Residues 1534-1577 form the EGF-like 7 domain; it reads APNPCEANGGKGPCSHLCLINYNRTLSCACPHLMKLDKDNTTCY. 3 disulfides stabilise this stretch: cysteine 1538-cysteine 1551, cysteine 1547-cysteine 1561, and cysteine 1563-cysteine 1576. N-linked (GlcNAc...) asparagine glycosylation is found at asparagine 1556, asparagine 1573, asparagine 1614, and asparagine 1643. LDL-receptor class B repeat units follow at residues 1625–1667, 1668–1711, 1712–1751, and 1752–1796; these read QRIY…DWVS, RNLF…HPLH, GKLYWTDGDNISVANMDGSNRTLLFTNQRGPVGLAIDYPE, and SKLY…MGDK. 4 N-linked (GlcNAc...) asparagine glycosylation sites follow: asparagine 1721, asparagine 1731, asparagine 1761, and asparagine 1823. The EGF-like 8 domain maps to 1842-1883; the sequence is GSNPCSVNNGDCSQLCLPTSETSRSCMCTAGYSLKSGQQSCE. 3 disulfides stabilise this stretch: cysteine 1846/cysteine 1857, cysteine 1853/cysteine 1867, and cysteine 1869/cysteine 1882. N-linked (GlcNAc...) asparagine glycosylation occurs at asparagine 1929. LDL-receptor class B repeat units follow at residues 1930–1972, 1973–2015, 2016–2059, and 2060–2103; these read DTIY…DWIA, GNIY…HPEK, GYLF…DYED, and GKLY…FEDY. Asparagine 1991 and asparagine 2044 each carry an N-linked (GlcNAc...) asparagine glycan. N-linked (GlcNAc...) asparagine glycans are attached at residues asparagine 2113 and asparagine 2123. The EGF-like 9 domain occupies 2151–2191; it reads GTNVCAQNNGGCQQLCLFRGGGRRTCACAHGMLSEDGVSCR. 3 disulfides stabilise this stretch: cysteine 2155–cysteine 2166, cysteine 2162–cysteine 2176, and cysteine 2178–cysteine 2190. 5 LDL-receptor class B repeats span residues 2247-2288, 2289-2337, 2338-2382, 2383-2425, and 2426-2467; these read NRIF…HRGW, DTLY…DECQ, NLMF…DHRA, EKIY…YGDY, and IFWT…VAND. Asparagine 2466 carries N-linked (GlcNAc...) asparagine glycosylation. One can recognise an EGF-like 10 domain in the interval 2472-2512; it reads ELSPCRVNNGGCQDLCLLTPKGHVNCSCRGERVLQEDFTCK. Intrachain disulfides connect cysteine 2476–cysteine 2487, cysteine 2483–cysteine 2497, and cysteine 2499–cysteine 2511. Residue asparagine 2496 is glycosylated (N-linked (GlcNAc...) asparagine). The N-linked (GlcNAc...) asparagine glycan is linked to asparagine 2515. 7 consecutive LDL-receptor class A domains span residues 2516 to 2557, 2558 to 2596, 2597 to 2635, 2636 to 2684, 2688 to 2730, 2730 to 2769, and 2770 to 2812; these read STCN…YCSS, RKCKKGFLHCMNGRCVASRFWCNGVDDCGDNSDEVPCNK, TSCAATEFRCRDGSCIGNSSRCNQFIDCEDASDEMNCTA, TDCS…NCPG, PKCP…RQDK, KFCYPVQFECNNHRCISKLWVCDGADDCGDGSDEDSRCRL, and TTCS…GCLY. 6 disulfides stabilise this stretch: cysteine 2518–cysteine 2531, cysteine 2526–cysteine 2544, cysteine 2538–cysteine 2555, cysteine 2560–cysteine 2572, cysteine 2567–cysteine 2585, and cysteine 2579–cysteine 2594. The N-linked (GlcNAc...) asparagine glycan is linked to asparagine 2595. Cystine bridges form between cysteine 2599–cysteine 2611, cysteine 2606–cysteine 2624, cysteine 2618–cysteine 2633, cysteine 2638–cysteine 2660, cysteine 2654–cysteine 2673, cysteine 2667–cysteine 2682, cysteine 2690–cysteine 2702, cysteine 2697–cysteine 2715, cysteine 2709–cysteine 2724, cysteine 2732–cysteine 2744, cysteine 2739–cysteine 2757, cysteine 2751–cysteine 2767, cysteine 2772–cysteine 2785, cysteine 2779–cysteine 2798, and cysteine 2792–cysteine 2810. N-linked (GlcNAc...) asparagine glycosylation is found at asparagine 2614 and asparagine 2632. Asparagine 2813 is a glycosylation site (N-linked (GlcNAc...) asparagine). 3 LDL-receptor class A domains span residues 2814 to 2853, 2854 to 2897, and 2900 to 2938; these read NTCDEREFMCGNRQCIPKHFVCDHDDDCGDGSDESPECEY, PTCG…RCSS, and SKCNDSFFMCKNGKCIPEALLCDNNNDCADGSDELNCFI. 15 cysteine pairs are disulfide-bonded: cysteine 2816–cysteine 2828, cysteine 2823–cysteine 2841, cysteine 2835–cysteine 2851, cysteine 2856–cysteine 2868, cysteine 2863–cysteine 2882, cysteine 2876–cysteine 2895, cysteine 2902–cysteine 2914, cysteine 2909–cysteine 2927, cysteine 2921–cysteine 2936, cysteine 2941–cysteine 2953, cysteine 2949–cysteine 2962, cysteine 2964–cysteine 2977, cysteine 2983–cysteine 2993, cysteine 2989–cysteine 3002, and cysteine 3004–cysteine 3018. N-linked (GlcNAc...) asparagine glycosylation occurs at asparagine 2903. The EGF-like 11 domain occupies 2939 to 2978; sequence NECLNKKLSGCSQECEDLKIGYKCRCRPGFRLKDDGKTCI. The EGF-like 12; calcium-binding domain maps to 2979–3019; it reads DIDECSTTYPCSQKCINTLGSYKCLCIEGYKLKPDNPTSCK. Asparagine 3045 and asparagine 3086 each carry an N-linked (GlcNAc...) asparagine glycan. 5 LDL-receptor class B repeats span residues 3066–3110, 3111–3153, 3154–3197, 3198–3240, and 3241–3281; these read QMIY…DWVG, GNLY…DVQN, GYLY…DYIN, SRIY…FEDY, and IYWT…YHPY. Asparagine 3176 carries N-linked (GlcNAc...) asparagine glycosylation. An N-linked (GlcNAc...) asparagine glycan is attached at asparagine 3261. Positions 3287-3328 constitute an EGF-like 13 domain; sequence PNHPCKTNNAGCSNLCLLSPGGGHKCACPTNFYLGSDGKTCV. Intrachain disulfides connect cysteine 3291-cysteine 3302, cysteine 3298-cysteine 3312, and cysteine 3314-cysteine 3327. LDL-receptor class A domains lie at 3329-3368, 3369-3407, 3408-3447, 3448-3488, 3489-3530, 3531-3569, 3570-3608, 3608-3646, 3649-3689, 3690-3730, and 3736-3776; these read SNCTASQFVCKNDKCIPFWWKCDTEDDCGDRSDEPEDCPE, FKCRPGQFQCSTGICTNPAFICDGDNDCQDNSDEANCDI, HVCLPSQFKCTNTNRCIPGIFRCNGQDNCGDGEDEKDCPE, VTCA…NCTQ, MTCG…ECDE, RTCEPYQFRCKNNRCVPGRWQCDYDNDCGDNSDEESCTP, RPCSESEFSCANGRCIAGRWKCDGDHDCADGSDEKDCIP, PRCEFDQYQCKNGHCIPMRWRCDADADCMDGTDEEDCGT, RTCP…ECLK, FQCP…DCES, and KSCS…SCSH. N-linked (GlcNAc...) asparagine glycosylation occurs at asparagine 3330. 38 disulfides stabilise this stretch: cysteine 3331/cysteine 3343, cysteine 3338/cysteine 3356, cysteine 3350/cysteine 3366, cysteine 3371/cysteine 3383, cysteine 3378/cysteine 3396, cysteine 3390/cysteine 3405, cysteine 3410/cysteine 3423, cysteine 3417/cysteine 3436, cysteine 3430/cysteine 3445, cysteine 3450/cysteine 3463, cysteine 3457/cysteine 3476, cysteine 3470/cysteine 3486, cysteine 3491/cysteine 3504, cysteine 3498/cysteine 3517, cysteine 3511/cysteine 3528, cysteine 3533/cysteine 3545, cysteine 3540/cysteine 3558, cysteine 3552/cysteine 3567, cysteine 3572/cysteine 3584, cysteine 3579/cysteine 3597, cysteine 3591/cysteine 3606, cysteine 3610/cysteine 3622, cysteine 3617/cysteine 3635, cysteine 3629/cysteine 3644, cysteine 3658/cysteine 3676, cysteine 3670/cysteine 3687, cysteine 3692/cysteine 3706, cysteine 3700/cysteine 3719, cysteine 3713/cysteine 3728, cysteine 3738/cysteine 3752, cysteine 3747/cysteine 3765, cysteine 3759/cysteine 3774, cysteine 3783/cysteine 3796, cysteine 3790/cysteine 3805, cysteine 3807/cysteine 3820, cysteine 3826/cysteine 3836, cysteine 3832/cysteine 3845, and cysteine 3847/cysteine 3858. N-linked (GlcNAc...) asparagine glycosylation is present at asparagine 3485. N-linked (GlcNAc...) asparagine glycosylation occurs at asparagine 3659. EGF-like domains follow at residues 3779 to 3821 and 3822 to 3859; these read KSYD…NSCQ and DVNECLRFGTCSQLCNNTKGSHVCSCAKNFMKTDNMCK. N-linked (GlcNAc...) asparagine glycosylation occurs at asparagine 3786. N-linked (GlcNAc...) asparagine glycosylation is present at asparagine 3837. LDL-receptor class B repeat units lie at residues 3910–3952, 3969–4011, 4012–4055, and 4056–4100; these read NKIY…THLN, GNIY…DPLR, GTMY…DYHN, and ERLY…FEDY. The Recognition site for proteolytical processing signature appears at 3939–3942; it reads RNRR. Asparagine 3952 carries an N-linked (GlcNAc...) asparagine glycan. Asparagine 4074 and asparagine 4124 each carry an N-linked (GlcNAc...) asparagine glycan. EGF-like domains are found at residues 4146–4182, 4195–4231, 4231–4267, 4267–4303, 4303–4339, 4339–4374, and 4372–4409; these read VTNPCDRKKCEWLCLLSPSGPVCTCPNGKRLDNGTCV, TTDTCDLVCLNGGSCFLNARKQAKCRCQPRYNGERCQ, QINQCSDYCQNGGLCTASPSGMPTCRCPTGFTGSRCD, DQQVCTNYCHNNGSCTVNQGNQPNCRCPPTFIGDRCQ, QYQQCFNYCENNGVCQMSRDGVKQCRCPPQFEGAQCQ, QDNKCSRCQEGKCNINRQSGDVSCICPDGKIAPSCL, and SCLTCDSYCLNGGTCSISDKTQLPECLCPLEVTGMRCE. Cystine bridges form between cysteine 4150–cysteine 4159, cysteine 4155–cysteine 4168, cysteine 4170–cysteine 4181, cysteine 4199–cysteine 4209, cysteine 4203–cysteine 4219, cysteine 4221–cysteine 4230, cysteine 4235–cysteine 4245, cysteine 4239–cysteine 4255, cysteine 4257–cysteine 4266, cysteine 4271–cysteine 4281, cysteine 4275–cysteine 4291, cysteine 4293–cysteine 4302, cysteine 4307–cysteine 4317, cysteine 4311–cysteine 4327, cysteine 4329–cysteine 4338, cysteine 4343–cysteine 4351, cysteine 4346–cysteine 4362, cysteine 4364–cysteine 4373, cysteine 4376–cysteine 4386, cysteine 4380–cysteine 4397, and cysteine 4399–cysteine 4408. Asparagine 4178 is a glycosylation site (N-linked (GlcNAc...) asparagine). Residue asparagine 4278 is glycosylated (N-linked (GlcNAc...) asparagine). The chain crosses the membrane as a helical span at residues 4420–4443; it reads RTASIVIPILLLLLLLAVVAFAWY. At 4444-4543 the chain is on the cytoplasmic side; the sequence is KWRIKGAKGF…ADDDLTDPLA (100 aa). Residues 4501–4506 carry the NPXY motif motif; the sequence is FTNPVY. Residues 4522–4543 are disordered; sequence STDEKRELLARGADDDLTDPLA. The segment covering 4523-4535 has biased composition (basic and acidic residues); it reads TDEKRELLARGAD.

It belongs to the LDLR family. As to quaternary structure, binds vitellogenin and LRPAP1 (alpha 2-macroglobulin). Cleaved into a 85 kDa membrane-spanning subunit (LRP-85) and a 515 kDa large extracellular domain (LRP-515) that remains non-covalently associated. Somatic.

It is found in the membrane. The protein resides in the coated pit. Functionally, endocytic receptor involved in endocytosis and in phagocytosis of apoptotic cells. Involved in cellular lipid homeostasis. Involved in the plasma clearance of chylomicron remnants and activated LRPAP1 (alpha 2-macroglobulin), as well as the local metabolism of complexes between plasminogen activators and their endogenous inhibitors. Acts as an alpha-2-macroglobulin receptor. The polypeptide is Low-density lipoprotein receptor-related protein 1 (LRP1) (Gallus gallus (Chicken)).